Here is a 642-residue protein sequence, read N- to C-terminus: Kinesin-2b (642 aa).

A Kinesin motor domain is found at 12–344 (NVMVMVRVRP…LRYADRAKQI (333 aa)). 107–114 (GQTGSGKT) is an ATP binding site. The ADP site is built by Gly110, Gly112, Lys113, and Thr114. Thr114 contributes to the Mg(2+) binding site. Positions 415–475 (VQSLRKNLDK…ERKAKERQLM (61 aa)) form a coiled coil.

It belongs to the TRAFAC class myosin-kinesin ATPase superfamily. Kinesin family. Kinesin II subfamily.

It is found in the cell projection. Its subcellular location is the cilium. The protein resides in the flagellum. The protein localises to the cytoplasm. It localises to the cytoskeleton. It is found in the flagellum axoneme. Its subcellular location is the flagellum basal body. Involved in anterograde intraflagellar transport (IFT). Involved in flagellar assembly. This Giardia intestinalis (strain ATCC 50803 / WB clone C6) (Giardia lamblia) protein is Kinesin-2b.